The sequence spans 394 residues: Elongation factor Tu 2 (394 aa).

In terms of domain architecture, tr-type G spans 10 to 204 (KPHVNVGTIG…YLDSYIPEPE (195 aa)). The segment at 19–26 (GHVDHGKT) is G1. Residue 19 to 26 (GHVDHGKT) participates in GTP binding. T26 is a Mg(2+) binding site. Positions 60-64 (GITIN) are G2. Residues 81–84 (DCPG) are G3. Residues 81-85 (DCPGH) and 136-139 (NKCD) contribute to the GTP site. The segment at 136-139 (NKCD) is G4. Positions 174–176 (SAL) are G5.

The protein belongs to the TRAFAC class translation factor GTPase superfamily. Classic translation factor GTPase family. EF-Tu/EF-1A subfamily. In terms of assembly, monomer.

It is found in the cytoplasm. It catalyses the reaction GTP + H2O = GDP + phosphate + H(+). Functionally, GTP hydrolase that promotes the GTP-dependent binding of aminoacyl-tRNA to the A-site of ribosomes during protein biosynthesis. This is Elongation factor Tu 2 from Serratia proteamaculans (strain 568).